The sequence spans 302 residues: Ethylmalonyl-CoA decarboxylase (302 aa).

It belongs to the enoyl-CoA hydratase/isomerase family.

Its subcellular location is the cytoplasm. The protein resides in the cytosol. It catalyses the reaction (2S)-ethylmalonyl-CoA + H(+) = butanoyl-CoA + CO2. The catalysed reaction is (S)-methylmalonyl-CoA + H(+) = propanoyl-CoA + CO2. The enzyme catalyses (2R)-ethylmalonyl-CoA + H(+) = butanoyl-CoA + CO2. In terms of biological role, decarboxylates ethylmalonyl-CoA, a potentially toxic metabolite, to form butyryl-CoA, suggesting it might be involved in metabolite proofreading. Acts preferentially on (S)-ethylmalonyl-CoA but also has some activity on the (R)-isomer. Also has methylmalonyl-CoA decarboxylase activity at lower level. The polypeptide is Ethylmalonyl-CoA decarboxylase (echdc1) (Danio rerio (Zebrafish)).